The following is a 277-amino-acid chain: Ribosomally synthesized cyclic peptide asperipin-2a precursor aprA (277 aa).

The first 19 residues, 1 to 19 (MHLSRYIAVLLSASSFVSA), serve as a signal peptide directing secretion. Propeptides lie at residues 20–69 (LPLQ…LDKR), 76–88 (KRNA…LDKR), 95–107 (KRNA…LDKR), 114–126 (KRNA…LDKR), 133–145 (KRNA…LDKR), 152–164 (KRNA…LDKR), 171–183 (KRNA…LDKR), 190–202 (KRNA…LDKR), 209–221 (KRNA…LDKR), 228–240 (KRNA…LDKR), 247–259 (KRNA…LDKR), and 266–277 (KRNAETPEDLDK).

Post-translationally, aprA is processed by kexin proteases to produce 11 identical copies of the hexapeptide Phe-Tyr-Tyr-Thr-Gly-Tyr, that is further modified aprY and aprR to yield asperipin-2a. The bicyclic structure of asperipin-2a is likely synthesized by the single ustYa family oxidase aprY. The reductase aprR may be required for the final reduction to yield asperipin-2a.

It participates in secondary metabolite biosynthesis. In terms of biological role, ribosomally synthesized cyclic peptide asperipin-2a precursor; part of the gene cluster that mediates the biosynthesis of the asperipin-2a, a bicyclic peptide that possesses two macrocyclic ether rings consisting of 14- and 17-membered paracyclophans. The aprA translated product contains a 11-fold repeated peptide embedding the hexapeptide Phe-Tyr-Tyr-Thr-Gly-Tyr, that is converted into asperipin-2a. After being excised from the precursor peptide by kexin proteases, the core peptides are cyclized and modified post-translationally by enzymes encoded within the corresponding gene cluster. This chain is Ribosomally synthesized cyclic peptide asperipin-2a precursor aprA, found in Aspergillus flavus (strain ATCC 200026 / FGSC A1120 / IAM 13836 / NRRL 3357 / JCM 12722 / SRRC 167).